The sequence spans 160 residues: Sec-independent protein translocase protein TatB (160 aa).

A helical transmembrane segment spans residues 1 to 21 (MFGMGFFEILVVLIVAIIFLG). Residues 118-160 (HLNEEVSNEEALNKEVSSDESPKEVQLTTDNNAKEHDKEKEHV) form a disordered region. Composition is skewed to basic and acidic residues over residues 128–140 (ALNK…ESPK) and 149–160 (NAKEHDKEKEHV).

It belongs to the TatB family. In terms of assembly, the Tat system comprises two distinct complexes: a TatABC complex, containing multiple copies of TatA, TatB and TatC subunits, and a separate TatA complex, containing only TatA subunits. Substrates initially bind to the TatABC complex, which probably triggers association of the separate TatA complex to form the active translocon.

It localises to the cell inner membrane. Functionally, part of the twin-arginine translocation (Tat) system that transports large folded proteins containing a characteristic twin-arginine motif in their signal peptide across membranes. Together with TatC, TatB is part of a receptor directly interacting with Tat signal peptides. TatB may form an oligomeric binding site that transiently accommodates folded Tat precursor proteins before their translocation. The chain is Sec-independent protein translocase protein TatB from Helicobacter pylori (strain J99 / ATCC 700824) (Campylobacter pylori J99).